Consider the following 423-residue polypeptide: UDP-N-acetylglucosamine 1-carboxyvinyltransferase 2 (423 aa).

23–24 (KN) is a binding site for phosphoenolpyruvate. R93 contacts UDP-N-acetyl-alpha-D-glucosamine. C117 (proton donor) is an active-site residue. C117 carries the post-translational modification 2-(S-cysteinyl)pyruvic acid O-phosphothioketal. Residues 122-126 (RPIDQ), D305, and I327 contribute to the UDP-N-acetyl-alpha-D-glucosamine site.

This sequence belongs to the EPSP synthase family. MurA subfamily.

The protein localises to the cytoplasm. It carries out the reaction phosphoenolpyruvate + UDP-N-acetyl-alpha-D-glucosamine = UDP-N-acetyl-3-O-(1-carboxyvinyl)-alpha-D-glucosamine + phosphate. It participates in cell wall biogenesis; peptidoglycan biosynthesis. Cell wall formation. Adds enolpyruvyl to UDP-N-acetylglucosamine. The chain is UDP-N-acetylglucosamine 1-carboxyvinyltransferase 2 from Listeria innocua serovar 6a (strain ATCC BAA-680 / CLIP 11262).